A 287-amino-acid chain; its full sequence is Protoheme IX farnesyltransferase (287 aa).

Transmembrane regions (helical) follow at residues 19–39 (LMVA…VTIT), 100–120 (MVLC…IVAV), 134–154 (FALL…WLAV), 162–182 (MLVV…WLHA), 212–232 (VWFH…LLEG), 233–253 (VGMR…AMLA), and 267–287 (VLCA…VSLF).

This sequence belongs to the UbiA prenyltransferase family. Protoheme IX farnesyltransferase subfamily.

The protein resides in the cell inner membrane. The enzyme catalyses heme b + (2E,6E)-farnesyl diphosphate + H2O = Fe(II)-heme o + diphosphate. It participates in porphyrin-containing compound metabolism; heme O biosynthesis; heme O from protoheme: step 1/1. In terms of biological role, converts heme B (protoheme IX) to heme O by substitution of the vinyl group on carbon 2 of heme B porphyrin ring with a hydroxyethyl farnesyl side group. This is Protoheme IX farnesyltransferase from Nitratidesulfovibrio vulgaris (strain DP4) (Desulfovibrio vulgaris).